The following is a 685-amino-acid chain: Mannan-binding lectin serine protease 2 (685 aa).

The first 19 residues, 1–19, serve as a signal peptide directing secretion; the sequence is MRLLIVLGLLWSLVATLLG. Residues 20–137 enclose the CUB 1 domain; it reads SKWPEPVFGR…TGFEAFYAAE (118 aa). The Ca(2+) site is built by Glu-67 and Asp-75. Cysteines 72 and 90 form a disulfide. N-linked (GlcNAc...) asparagine glycosylation occurs at Asn-103. Ca(2+) is bound by residues Asp-120, Ser-122, Asn-123, Asp-138, and Val-139. The 44-residue stretch at 138 to 181 folds into the EGF-like; calcium-binding domain; it reads DVDECRTSLGDSVPCDHYCHNYLGGYYCSCRVGYILHQNKHTCS. 4 disulfide bridges follow: Cys-152–Cys-165, Cys-167–Cys-180, Cys-184–Cys-211, and Cys-241–Cys-259. At Asn-158 the chain carries (3R)-3-hydroxyasparagine. Ca(2+) is bound by residues Tyr-159 and Gly-162. The 113-residue stretch at 184–296 folds into the CUB 2 domain; sequence CSGQVFTGRS…TGWKIHYTST (113 aa). N-linked (GlcNAc...) asparagine glycosylation is present at Asn-285. Sushi domains lie at 298–363 and 364–431; these read QPCP…ECSI and IDCG…VCKP. 7 disulfide bridges follow: Cys-300-Cys-348, Cys-328-Cys-361, Cys-366-Cys-411, Cys-396-Cys-429, Cys-433-Cys-551, Cys-597-Cys-617, and Cys-628-Cys-659. The 240-residue stretch at 444–683 folds into the Peptidase S1 domain; the sequence is IIGGQPAKPG…YIPWIENIIN (240 aa). Residues His-482 and Asp-531 each act as charge relay system in the active site. The active-site Charge relay system is Ser-632. Asn-641 is a glycosylation site (N-linked (GlcNAc...) asparagine).

Belongs to the peptidase S1 family. As to quaternary structure, homodimer; disulfide-linked. Binds MBL2. Isoform 2 binds to MASP1. Binds SERPING1. In terms of processing, N-glycosylated. Post-translationally, the iron and 2-oxoglutarate dependent 3-hydroxylation of aspartate and asparagine is (R) stereospecific within EGF domains. As to expression, highly expressed in liver. Secreted in plasma.

It is found in the secreted. It catalyses the reaction Selective cleavage after Arg-223 in complement component C2 (-Ser-Leu-Gly-Arg-|-Lys-Ile-Gln-Ile) and after Arg-76 in complement component C4 (-Gly-Leu-Gln-Arg-|-Ala-Leu-Glu-Ile).. In terms of biological role, serum protease that plays an important role in the activation of the complement system via mannose-binding lectin. After activation by auto-catalytic cleavage it cleaves C2 and C4, leading to their activation and to the formation of C3 convertase. The sequence is that of Mannan-binding lectin serine protease 2 (Masp2) from Rattus norvegicus (Rat).